A 346-amino-acid polypeptide reads, in one-letter code: Phosphoribosylformylglycinamidine cyclo-ligase (346 aa).

The protein belongs to the AIR synthase family.

Its subcellular location is the cytoplasm. The catalysed reaction is 2-formamido-N(1)-(5-O-phospho-beta-D-ribosyl)acetamidine + ATP = 5-amino-1-(5-phospho-beta-D-ribosyl)imidazole + ADP + phosphate + H(+). It participates in purine metabolism; IMP biosynthesis via de novo pathway; 5-amino-1-(5-phospho-D-ribosyl)imidazole from N(2)-formyl-N(1)-(5-phospho-D-ribosyl)glycinamide: step 2/2. In Bacillus cereus (strain B4264), this protein is Phosphoribosylformylglycinamidine cyclo-ligase.